The primary structure comprises 1167 residues: Integrin alpha-10 (1167 aa).

The N-terminal stretch at 1–22 (MELPFVTHLFLPLVFLTGLCSP) is a signal peptide. Residues 23 to 1122 (FNLDEHHPRL…VVQTRPILIS (1100 aa)) lie on the Extracellular side of the membrane. FG-GAP repeat units follow at residues 24-85 (NLDE…HNAP) and 95-154 (QLGN…PQGS). C76 and C86 form a disulfide bridge. N98, N234, N336, and N364 each carry an N-linked (GlcNAc...) asparagine glycan. A VWFA domain is found at 167 to 350 (DVVIVLDGSN…AALTDIVDAL (184 aa)). FG-GAP repeat units lie at residues 361–412 (HAEN…LFPP), 417–470 (EDEF…KDGA), 472–534 (RVAQ…SLLT), 535–593 (LQGT…GVRP), and 597–657 (QRIA…VTPQ). 12 residues coordinate Ca(2+): D494, D496, D498, D502, D558, N560, D562, D566, D620, D622, D624, and D628. 2 cysteine pairs are disulfide-bonded: C666/C675 and C681/C736. N-linked (GlcNAc...) asparagine glycans are attached at residues N733 and N763. C789 and C795 are oxidised to a cystine. N-linked (GlcNAc...) asparagine glycosylation is found at N839, N921, N1011, N1018, and N1039. Residues 1123–1145 (LWILIGSVLGGLLLLALLVFCLW) form a helical membrane-spanning segment. The Cytoplasmic segment spans residues 1146–1167 (KLGFFAHKKIPEEEKREEKLEQ).

This sequence belongs to the integrin alpha chain family. Heterodimer of an alpha and a beta subunit. Alpha-10 associates with beta-1. In terms of tissue distribution, widely expressed with highest expression in muscle and heart. Found in articular cartilage.

It localises to the membrane. Its function is as follows. Integrin alpha-10/beta-1 is a receptor for collagen. This Homo sapiens (Human) protein is Integrin alpha-10 (ITGA10).